The primary structure comprises 945 residues: Isoleucine--tRNA ligase (945 aa).

Residues 66–76 (PYANGDIHLGH) carry the 'HIGH' region motif. Glu-581 contributes to the L-isoleucyl-5'-AMP binding site. A 'KMSKS' region motif is present at residues 622–626 (KMSKS). Lys-625 contacts ATP. Residues Cys-908, Cys-911, Cys-928, and Cys-931 each coordinate Zn(2+).

It belongs to the class-I aminoacyl-tRNA synthetase family. IleS type 1 subfamily. Monomer. Zn(2+) is required as a cofactor.

It is found in the cytoplasm. The catalysed reaction is tRNA(Ile) + L-isoleucine + ATP = L-isoleucyl-tRNA(Ile) + AMP + diphosphate. Its function is as follows. Catalyzes the attachment of isoleucine to tRNA(Ile). As IleRS can inadvertently accommodate and process structurally similar amino acids such as valine, to avoid such errors it has two additional distinct tRNA(Ile)-dependent editing activities. One activity is designated as 'pretransfer' editing and involves the hydrolysis of activated Val-AMP. The other activity is designated 'posttransfer' editing and involves deacylation of mischarged Val-tRNA(Ile). The sequence is that of Isoleucine--tRNA ligase from Burkholderia ambifaria (strain MC40-6).